Here is a 268-residue protein sequence, read N- to C-terminus: Eukaryotic translation initiation factor 3 subunit J (268 aa).

3 disordered regions span residues 1–27 (MSWDDEEFEVRTSTKDQPMVVSWDDEF), 40–63 (DAEEVPKQKQKPKAAPKAAKKVDK), and 217–249 (LAKVKGGTATGGAGKKKAKAARPNLGGAFKKDQ). The segment covering 47–58 (QKQKPKAAPKAA) has biased composition (basic residues). Positions 191–221 (IESIRQTVATLNVLIKEKERQERQARLAKVK) form a coiled coil.

The protein belongs to the eIF-3 subunit J family. As to quaternary structure, component of the eukaryotic translation initiation factor 3 (eIF-3) complex.

Its subcellular location is the cytoplasm. Functionally, component of the eukaryotic translation initiation factor 3 (eIF-3) complex, which is involved in protein synthesis of a specialized repertoire of mRNAs and, together with other initiation factors, stimulates binding of mRNA and methionyl-tRNAi to the 40S ribosome. The eIF-3 complex specifically targets and initiates translation of a subset of mRNAs involved in cell proliferation. The polypeptide is Eukaryotic translation initiation factor 3 subunit J (Eremothecium gossypii (strain ATCC 10895 / CBS 109.51 / FGSC 9923 / NRRL Y-1056) (Yeast)).